Here is a 382-residue protein sequence, read N- to C-terminus: 4-hydroxybutyrate dehydrogenase (382 aa).

Residues aspartate 37, asparagine 67, 94-98, 138-142, and lysine 159 each bind NAD(+); these read GSSID and TTSGT. Residues aspartate 193, histidine 197, histidine 261, and histidine 280 each coordinate Fe cation. Histidine 280 contacts NAD(+).

It belongs to the iron-containing alcohol dehydrogenase family. Fe cation serves as cofactor.

The enzyme catalyses 4-hydroxybutanoate + NAD(+) = succinate semialdehyde + NADH + H(+). With respect to regulation, shows competitive inhibition of GHBDH activity by the product succinic semialdehyde, and non-competitive inhibitions by the three other substrate-product combinations. The conversion of GHB to SSA is activated by two different saturating purified nudix hydrolases, B.methanolicus activator ACT and E.coli NudF. The nudix hydrolases do not activate the reverse reaction. Its function is as follows. Involved in the degradation of 4-hydroxybutyrate. Catalyzes the interconversion of gamma-hydroxybutyrate (GHB) and succinic semialdehyde (SSA). The polypeptide is 4-hydroxybutyrate dehydrogenase (Cupriavidus necator (Alcaligenes eutrophus)).